We begin with the raw amino-acid sequence, 59 residues long: Antitoxin Rv0909 (59 aa).

Antitoxin component of a type II toxin-antitoxin (TA) system. Upon expression in M.smegmatis neutralizes the effect of cognate toxin Rv0910. In Mycobacterium tuberculosis (strain ATCC 25618 / H37Rv), this protein is Antitoxin Rv0909.